Consider the following 217-residue polypeptide: Leucyl/phenylalanyl-tRNA--protein transferase (217 aa).

This sequence belongs to the L/F-transferase family.

The protein localises to the cytoplasm. The catalysed reaction is N-terminal L-lysyl-[protein] + L-leucyl-tRNA(Leu) = N-terminal L-leucyl-L-lysyl-[protein] + tRNA(Leu) + H(+). It catalyses the reaction N-terminal L-arginyl-[protein] + L-leucyl-tRNA(Leu) = N-terminal L-leucyl-L-arginyl-[protein] + tRNA(Leu) + H(+). The enzyme catalyses L-phenylalanyl-tRNA(Phe) + an N-terminal L-alpha-aminoacyl-[protein] = an N-terminal L-phenylalanyl-L-alpha-aminoacyl-[protein] + tRNA(Phe). In terms of biological role, functions in the N-end rule pathway of protein degradation where it conjugates Leu, Phe and, less efficiently, Met from aminoacyl-tRNAs to the N-termini of proteins containing an N-terminal arginine or lysine. The chain is Leucyl/phenylalanyl-tRNA--protein transferase from Caulobacter vibrioides (strain ATCC 19089 / CIP 103742 / CB 15) (Caulobacter crescentus).